The sequence spans 443 residues: Ribosomal protein uS12 methylthiotransferase RimO (443 aa).

The MTTase N-terminal domain occupies 9-119 (PKIGMVSLGC…VVSAVHDAAP (111 aa)). The [4Fe-4S] cluster site is built by Cys18, Cys54, Cys83, Cys150, Cys154, and Cys157. Residues 136–373 (LTPRHYSYLK…MEKAAQISEA (238 aa)) form the Radical SAM core domain. One can recognise a TRAM domain in the interval 376–443 (QAKIGRDIAT…EHDLFGVALS (68 aa)).

It belongs to the methylthiotransferase family. RimO subfamily. [4Fe-4S] cluster serves as cofactor.

Its subcellular location is the cytoplasm. It carries out the reaction L-aspartate(89)-[ribosomal protein uS12]-hydrogen + (sulfur carrier)-SH + AH2 + 2 S-adenosyl-L-methionine = 3-methylsulfanyl-L-aspartate(89)-[ribosomal protein uS12]-hydrogen + (sulfur carrier)-H + 5'-deoxyadenosine + L-methionine + A + S-adenosyl-L-homocysteine + 2 H(+). Its function is as follows. Catalyzes the methylthiolation of an aspartic acid residue of ribosomal protein uS12. This chain is Ribosomal protein uS12 methylthiotransferase RimO, found in Zymomonas mobilis subsp. mobilis (strain ATCC 31821 / ZM4 / CP4).